Reading from the N-terminus, the 173-residue chain is Alpha-crystallin A chain (173 aa).

Position 1 is an N-acetylmethionine (Met-1). The required for complex formation with BFSP1 and BFSP2 stretch occupies residues 1–63 (MDIAIQHPWF…RSVLDSGVSE (63 aa)). Gln-6 is subject to Deamidated glutamine; partial. The residue at position 45 (Ser-45) is a Phosphoserine. Residue Gln-50 is modified to Deamidated glutamine; partial. One can recognise a sHSP domain in the interval 52–162 (LFRSVLDSGV…GHSERAIPVS (111 aa)). Lys-70 carries the post-translational modification N6-acetyllysine. Gln-90 is modified (deamidated glutamine; partial). Lys-99 bears the N6-acetyllysine mark. His-100 provides a ligand contact to Zn(2+). Asn-101 carries the post-translational modification Deamidated asparagine; partial. Residues Glu-102 and His-107 each contribute to the Zn(2+) site. At Ser-122 the chain carries Phosphoserine. Asn-123 is modified (deamidated asparagine; partial). Residues 144–173 (PKIPSGMDAGHSERAIPVSREEKPSSAPSS) are disordered. The segment covering 153–167 (GHSERAIPVSREEKP) has biased composition (basic and acidic residues). Residue His-154 participates in Zn(2+) binding. Ser-162 is a glycosylation site (O-linked (GlcNAc) serine).

It belongs to the small heat shock protein (HSP20) family. In terms of assembly, heteromer composed of three CRYAA and one CRYAB subunits. Inter-subunit bridging via zinc ions enhances stability, which is crucial as there is no protein turn over in the lens. Can also form homodimers and homotetramers (dimers of dimers) which serve as the building blocks of homooligomers. Within homooligomers, the zinc-binding motif is created from residues of 3 different molecules. His-100 and Glu-102 from one molecule are ligands of the zinc ion, and His-107 and His-154 residues from additional molecules complete the site with tetrahedral coordination geometry. Part of a complex required for lens intermediate filament formation composed of BFSP1, BFSP2 and CRYAA. Acetylation at Lys-70 may increase chaperone activity. In terms of processing, undergoes age-dependent proteolytical cleavage at the C-terminus.

Its subcellular location is the cytoplasm. The protein resides in the nucleus. Functionally, contributes to the transparency and refractive index of the lens. Acts as a chaperone, preventing aggregation of various proteins under a wide range of stress conditions. Required for the correct formation of lens intermediate filaments as part of a complex composed of BFSP1, BFSP2 and CRYAA. The polypeptide is Alpha-crystallin A chain (CRYAA) (Ceratotherium simum (White rhinoceros)).